We begin with the raw amino-acid sequence, 92 residues long: Small ribosomal subunit protein uS19 (92 aa).

This sequence belongs to the universal ribosomal protein uS19 family.

In terms of biological role, protein S19 forms a complex with S13 that binds strongly to the 16S ribosomal RNA. This chain is Small ribosomal subunit protein uS19, found in Pectobacterium atrosepticum (strain SCRI 1043 / ATCC BAA-672) (Erwinia carotovora subsp. atroseptica).